The chain runs to 402 residues: D-galactonate dehydratase family member EGBG_02030 (402 aa).

Aspartate 207 serves as a coordination point for Mg(2+). Histidine 209 contributes to the D-arabinonate binding site. Residues glutamate 233 and glutamate 259 each coordinate Mg(2+). Residues glutamate 259, arginine 280, histidine 309, and glutamate 336 each contribute to the D-arabinonate site.

This sequence belongs to the mandelate racemase/muconate lactonizing enzyme family. GalD subfamily.

Has no detectable activity with D-mannonate and with a panel of 70 other acid sugars (in vitro), in spite of the conservation of the residues that are expected to be important for catalytic activity and cofactor binding. May have evolved a divergent function. This is D-galactonate dehydratase family member EGBG_02030 from Enterococcus gallinarum (strain EG2).